We begin with the raw amino-acid sequence, 390 residues long: S-adenosylmethionine synthase 1 (390 aa).

Mg(2+) is bound at residue E9. H15 is a binding site for ATP. E43 contributes to the K(+) binding site. L-methionine-binding residues include E56 and Q99. ATP-binding positions include 167–169 (DGK), 235–238 (SGRF), D246, 252–253 (RK), A269, K273, and K277. D246 contributes to the L-methionine binding site. K277 contributes to the L-methionine binding site.

The protein belongs to the AdoMet synthase family. Homotetramer. The cofactor is Mn(2+). Mg(2+) is required as a cofactor. Co(2+) serves as cofactor. It depends on K(+) as a cofactor.

The protein localises to the cytoplasm. The enzyme catalyses L-methionine + ATP + H2O = S-adenosyl-L-methionine + phosphate + diphosphate. It participates in amino-acid biosynthesis; S-adenosyl-L-methionine biosynthesis; S-adenosyl-L-methionine from L-methionine: step 1/1. Catalyzes the formation of S-adenosylmethionine from methionine and ATP. The reaction comprises two steps that are both catalyzed by the same enzyme: formation of S-adenosylmethionine (AdoMet) and triphosphate, and subsequent hydrolysis of the triphosphate. The protein is S-adenosylmethionine synthase 1 (SAM1) of Petunia hybrida (Petunia).